A 332-amino-acid polypeptide reads, in one-letter code: Holliday junction branch migration complex subunit RuvB (332 aa).

Residues 1–181 form a large ATPase domain (RuvB-L) region; it reads MARILDNNVM…FGITGHMEYY (181 aa). ATP-binding positions include L20, R21, G62, K65, T66, T67, 128 to 130, R171, Y181, and R218; that span reads EDF. T66 lines the Mg(2+) pocket. A small ATPAse domain (RuvB-S) region spans residues 182–252; it reads QEKDLTEIVE…ITDRALTMLD (71 aa). The tract at residues 255–332 is head domain (RuvB-H); sequence REGLDYIDQK…RHLGYPYQNT (78 aa). Residues R291, R310, R312, and R315 each contribute to the DNA site.

It belongs to the RuvB family. As to quaternary structure, homohexamer. Forms an RuvA(8)-RuvB(12)-Holliday junction (HJ) complex. HJ DNA is sandwiched between 2 RuvA tetramers; dsDNA enters through RuvA and exits via RuvB. An RuvB hexamer assembles on each DNA strand where it exits the tetramer. Each RuvB hexamer is contacted by two RuvA subunits (via domain III) on 2 adjacent RuvB subunits; this complex drives branch migration. In the full resolvosome a probable DNA-RuvA(4)-RuvB(12)-RuvC(2) complex forms which resolves the HJ.

It localises to the cytoplasm. The catalysed reaction is ATP + H2O = ADP + phosphate + H(+). The RuvA-RuvB-RuvC complex processes Holliday junction (HJ) DNA during genetic recombination and DNA repair, while the RuvA-RuvB complex plays an important role in the rescue of blocked DNA replication forks via replication fork reversal (RFR). RuvA specifically binds to HJ cruciform DNA, conferring on it an open structure. The RuvB hexamer acts as an ATP-dependent pump, pulling dsDNA into and through the RuvAB complex. RuvB forms 2 homohexamers on either side of HJ DNA bound by 1 or 2 RuvA tetramers; 4 subunits per hexamer contact DNA at a time. Coordinated motions by a converter formed by DNA-disengaged RuvB subunits stimulates ATP hydrolysis and nucleotide exchange. Immobilization of the converter enables RuvB to convert the ATP-contained energy into a lever motion, pulling 2 nucleotides of DNA out of the RuvA tetramer per ATP hydrolyzed, thus driving DNA branch migration. The RuvB motors rotate together with the DNA substrate, which together with the progressing nucleotide cycle form the mechanistic basis for DNA recombination by continuous HJ branch migration. Branch migration allows RuvC to scan DNA until it finds its consensus sequence, where it cleaves and resolves cruciform DNA. This is Holliday junction branch migration complex subunit RuvB from Streptococcus pyogenes serotype M1.